Reading from the N-terminus, the 247-residue chain is Caffeoyl-CoA O-methyltransferase 1 (247 aa).

Residue Lys21 coordinates substrate. S-adenosyl-L-methionine is bound by residues Thr63, Glu85, 87–88 (GV), Ser93, Asp111, and Ala140. A substrate-binding site is contributed by Asp163. Asp163 serves as a coordination point for a divalent metal cation. Asp165 lines the S-adenosyl-L-methionine pocket. Residues Asp189 and Asn190 each coordinate a divalent metal cation. Asn194 is a binding site for substrate.

It belongs to the class I-like SAM-binding methyltransferase superfamily. Cation-dependent O-methyltransferase family. CCoAMT subfamily. It depends on a divalent metal cation as a cofactor.

It catalyses the reaction (E)-caffeoyl-CoA + S-adenosyl-L-methionine = (E)-feruloyl-CoA + S-adenosyl-L-homocysteine + H(+). The protein operates within aromatic compound metabolism; phenylpropanoid biosynthesis. Methylates caffeoyl-CoA to feruloyl-CoA and 5-hydroxyferuloyl-CoA to sinapoyl-CoA. Plays a role in the synthesis of feruloylated polysaccharides. Involved in the reinforcement of the plant cell wall. Also involved in the responding to wounding or pathogen challenge by the increased formation of cell wall-bound ferulic acid polymers. The polypeptide is Caffeoyl-CoA O-methyltransferase 1 (CCOAOMT1) (Populus trichocarpa (Western balsam poplar)).